The primary structure comprises 448 residues: Signal recognition particle protein (448 aa).

Residues 101–108, 182–186, and 240–243 contribute to the GTP site; these read GLQGSGKT, DSAGR, and SKFD.

It belongs to the GTP-binding SRP family. SRP54 subfamily. Part of the signal recognition particle protein translocation system, which is composed of SRP and FtsY. SRP is a ribonucleoprotein composed of Ffh and a 4.5S RNA molecule.

The protein resides in the cytoplasm. The enzyme catalyses GTP + H2O = GDP + phosphate + H(+). Its function is as follows. Involved in targeting and insertion of nascent membrane proteins into the cytoplasmic membrane. Binds to the hydrophobic signal sequence of the ribosome-nascent chain (RNC) as it emerges from the ribosomes. The SRP-RNC complex is then targeted to the cytoplasmic membrane where it interacts with the SRP receptor FtsY. Interaction with FtsY leads to the transfer of the RNC complex to the Sec translocase for insertion into the membrane, the hydrolysis of GTP by both Ffh and FtsY, and the dissociation of the SRP-FtsY complex into the individual components. This chain is Signal recognition particle protein, found in Helicobacter pylori (strain J99 / ATCC 700824) (Campylobacter pylori J99).